The chain runs to 105 residues: Ribonuclease P protein component 4 (105 aa).

Zn(2+) is bound by residues C63, C66, C89, and C92.

The protein belongs to the eukaryotic/archaeal RNase P protein component 4 family. Consists of a catalytic RNA component and at least 4-5 protein subunits. Zn(2+) is required as a cofactor.

Its subcellular location is the cytoplasm. The enzyme catalyses Endonucleolytic cleavage of RNA, removing 5'-extranucleotides from tRNA precursor.. Functionally, part of ribonuclease P, a protein complex that generates mature tRNA molecules by cleaving their 5'-ends. The chain is Ribonuclease P protein component 4 from Methanoculleus marisnigri (strain ATCC 35101 / DSM 1498 / JR1).